The primary structure comprises 118 residues: Ribosome-binding factor A (118 aa).

This sequence belongs to the RbfA family. In terms of assembly, monomer. Binds 30S ribosomal subunits, but not 50S ribosomal subunits or 70S ribosomes.

It localises to the cytoplasm. Its function is as follows. One of several proteins that assist in the late maturation steps of the functional core of the 30S ribosomal subunit. Associates with free 30S ribosomal subunits (but not with 30S subunits that are part of 70S ribosomes or polysomes). Required for efficient processing of 16S rRNA. May interact with the 5'-terminal helix region of 16S rRNA. The protein is Ribosome-binding factor A of Bacillus anthracis (strain A0248).